The primary structure comprises 682 residues: Potassium-transporting ATPase ATP-binding subunit (682 aa).

The next 4 membrane-spanning stretches (helical) occupy residues proline 34–valine 54, isoleucine 58–phenylalanine 78, isoleucine 219–leucine 239, and valine 254–isoleucine 274. Aspartate 307 functions as the 4-aspartylphosphate intermediate in the catalytic mechanism. ATP contacts are provided by residues aspartate 344, glutamate 348, phenylalanine 377–serine 384, and lysine 395. Mg(2+) contacts are provided by aspartate 518 and aspartate 522. 3 helical membrane-spanning segments follow: residues phenylalanine 588–methionine 608, alanine 616–leucine 636, and leucine 662–alanine 682.

This sequence belongs to the cation transport ATPase (P-type) (TC 3.A.3) family. Type IA subfamily. The system is composed of three essential subunits: KdpA, KdpB and KdpC.

The protein localises to the cell inner membrane. It carries out the reaction K(+)(out) + ATP + H2O = K(+)(in) + ADP + phosphate + H(+). Functionally, part of the high-affinity ATP-driven potassium transport (or Kdp) system, which catalyzes the hydrolysis of ATP coupled with the electrogenic transport of potassium into the cytoplasm. This subunit is responsible for energy coupling to the transport system and for the release of the potassium ions to the cytoplasm. The sequence is that of Potassium-transporting ATPase ATP-binding subunit from Salmonella choleraesuis (strain SC-B67).